Consider the following 124-residue polypeptide: Membrane magnesium transporter 2 (124 aa).

Met1 is a topological domain (cytoplasmic). A helical membrane pass occupies residues Val2 to Phe22. The Lumenal portion of the chain corresponds to Ser23–Asp44. A helical transmembrane segment spans residues Ile45–Gly65. Topologically, residues Asp66–Phe124 are cytoplasmic.

Belongs to the membrane magnesium transporter (TC 1.A.67) family.

It localises to the golgi apparatus membrane. Its subcellular location is the early endosome membrane. Mediates Mg(2+) transport. The polypeptide is Membrane magnesium transporter 2 (Rattus norvegicus (Rat)).